The primary structure comprises 155 residues: Aspartate 1-decarboxylase (155 aa).

Ser-24 (schiff-base intermediate with substrate; via pyruvic acid) is an active-site residue. Ser-24 is modified (pyruvic acid (Ser)). Residue Thr-56 coordinates substrate. Catalysis depends on Tyr-57, which acts as the Proton donor. Substrate is bound at residue 72–74 (GAA).

This sequence belongs to the PanD family. In terms of assembly, heterooctamer of four alpha and four beta subunits. It depends on pyruvate as a cofactor. In terms of processing, is synthesized initially as an inactive proenzyme, which is activated by self-cleavage at a specific serine bond to produce a beta-subunit with a hydroxyl group at its C-terminus and an alpha-subunit with a pyruvoyl group at its N-terminus.

The protein localises to the cytoplasm. It catalyses the reaction L-aspartate + H(+) = beta-alanine + CO2. The protein operates within cofactor biosynthesis; (R)-pantothenate biosynthesis; beta-alanine from L-aspartate: step 1/1. Functionally, catalyzes the pyruvoyl-dependent decarboxylation of aspartate to produce beta-alanine. This is Aspartate 1-decarboxylase from Methylocella silvestris (strain DSM 15510 / CIP 108128 / LMG 27833 / NCIMB 13906 / BL2).